Reading from the N-terminus, the 336-residue chain is UDP-3-O-acylglucosamine N-acyltransferase (336 aa).

His236 acts as the Proton acceptor in catalysis.

The protein belongs to the transferase hexapeptide repeat family. LpxD subfamily. As to quaternary structure, homotrimer.

It carries out the reaction a UDP-3-O-[(3R)-3-hydroxyacyl]-alpha-D-glucosamine + a (3R)-hydroxyacyl-[ACP] = a UDP-2-N,3-O-bis[(3R)-3-hydroxyacyl]-alpha-D-glucosamine + holo-[ACP] + H(+). It participates in bacterial outer membrane biogenesis; LPS lipid A biosynthesis. In terms of biological role, catalyzes the N-acylation of UDP-3-O-acylglucosamine using 3-hydroxyacyl-ACP as the acyl donor. Is involved in the biosynthesis of lipid A, a phosphorylated glycolipid that anchors the lipopolysaccharide to the outer membrane of the cell. The protein is UDP-3-O-acylglucosamine N-acyltransferase of Aromatoleum aromaticum (strain DSM 19018 / LMG 30748 / EbN1) (Azoarcus sp. (strain EbN1)).